Reading from the N-terminus, the 249-residue chain is 1-(5-phosphoribosyl)-5-[(5-phosphoribosylamino)methylideneamino] imidazole-4-carboxamide isomerase (249 aa).

Aspartate 11 (proton acceptor) is an active-site residue. Aspartate 133 acts as the Proton donor in catalysis.

Belongs to the HisA/HisF family.

It localises to the cytoplasm. The catalysed reaction is 1-(5-phospho-beta-D-ribosyl)-5-[(5-phospho-beta-D-ribosylamino)methylideneamino]imidazole-4-carboxamide = 5-[(5-phospho-1-deoxy-D-ribulos-1-ylimino)methylamino]-1-(5-phospho-beta-D-ribosyl)imidazole-4-carboxamide. The protein operates within amino-acid biosynthesis; L-histidine biosynthesis; L-histidine from 5-phospho-alpha-D-ribose 1-diphosphate: step 4/9. The chain is 1-(5-phosphoribosyl)-5-[(5-phosphoribosylamino)methylideneamino] imidazole-4-carboxamide isomerase from Mannheimia succiniciproducens (strain KCTC 0769BP / MBEL55E).